The following is a 950-amino-acid chain: Kinase suppressor of Ras 2 (950 aa).

Positions 239–296 are disordered; it reads PPLESGHRSLPPSPRQRHAVRTPPRTPNIVTTVTPPGTPPMRKKNKLKPPGTPPPSSR. Positions 259-273 are enriched in low complexity; the sequence is RTPPRTPNIVTTVTP. Phosphothreonine is present on residues Thr272 and Thr276. A Phorbol-ester/DAG-type zinc finger spans residues 412–456; it reads KHRFSTKYWMSQTCTVCGKGMLFGLKCKNCKLKCHNKCTKEAPPC. The Zn(2+) site is built by His413, Cys425, Cys428, Cys438, Cys441, His446, Cys449, and Cys456. The residue at position 474 (Ser474) is a Phosphoserine; by MARK3. The residue at position 497 (Thr497) is a Phosphothreonine. The segment at 498–556 is disordered; that stretch reads LPKTNKINKDHIPVPYQPDSSSNPSSTTSSTPSSPAPPLPPSATPPSPLHPSPQCTRQQ. Positions 517 to 530 are enriched in low complexity; sequence SSSNPSSTTSSTPS. The span at 531–548 shows a compositional bias: pro residues; sequence SPAPPLPPSATPPSPLHP. The 266-residue stretch at 666 to 931 folds into the Protein kinase domain; it reads LEIGELIGKG…TKLMDMLEKL (266 aa). 672-680 contacts ATP; it reads IGKGRFGQV. Asp786 (proton donor/acceptor) is an active-site residue. Residues Lys788 and Asp803 each contribute to the ATP site.

This sequence belongs to the protein kinase superfamily. TKL Ser/Thr protein kinase family. Heterodimerizes (via N-terminus) with BRAF (via N-terminus) in a MAP2K1/MEK1-dependent manner. Interacts with BRAF; this increases the low intrinsic protein kinase activity of KSR2. Interacts with MAP2K1, forming a heterodimer that can dimerize to form a heterotetramer. Interacts with MAP3K8, MAPK, RAS and RAF. In terms of processing, phosphorylated on Ser-474 by MARK3. As to expression, mainly expressed in brain and kidney.

The protein localises to the cytoplasm. It is found in the membrane. It carries out the reaction L-seryl-[protein] + ATP = O-phospho-L-seryl-[protein] + ADP + H(+). The enzyme catalyses L-threonyl-[protein] + ATP = O-phospho-L-threonyl-[protein] + ADP + H(+). Its activity is regulated as follows. Kinase activity is inhibited by ASC24. In terms of biological role, location-regulated scaffold connecting MEK to RAF. Has very low protein kinase activity and can phosphorylate MAP2K1 at several Ser and Thr residues with very low efficiency (in vitro). Acts as MAP2K1/MEK1-dependent allosteric activator of BRAF; upon binding to MAP2K1/MEK1, dimerizes with BRAF and promotes BRAF-mediated phosphorylation of MAP2K1/MEK1. Interaction with BRAF enhances KSR2-mediated phosphorylation of MAP2K1 (in vitro). Blocks MAP3K8 kinase activity and MAP3K8-mediated signaling. Acts as a negative regulator of MAP3K3-mediated activation of ERK, JNK and NF-kappa-B pathways, inhibiting MAP3K3-mediated interleukin-8 production. The protein is Kinase suppressor of Ras 2 of Homo sapiens (Human).